The primary structure comprises 298 residues: Cyclin-dependent kinase 2 homolog (298 aa).

The 281-residue stretch at 4 to 284 (YHKMEKIGEG…AKEALKHDYF (281 aa)) folds into the Protein kinase domain. Residues 10–18 (IGEGTYGVV) and K32 contribute to the ATP site. The residue at position 14 (T14) is a Phosphothreonine. A Phosphotyrosine modification is found at Y15. D125 functions as the Proton acceptor in the catalytic mechanism. Position 158 is a phosphothreonine (T158).

This sequence belongs to the protein kinase superfamily. CMGC Ser/Thr protein kinase family. CDC2/CDKX subfamily. In terms of assembly, may form a complex composed of at least the catalytic subunit CRK2 and a cyclin. The cofactor is Mg(2+).

The protein resides in the cytoplasm. It catalyses the reaction L-seryl-[protein] + ATP = O-phospho-L-seryl-[protein] + ADP + H(+). The enzyme catalyses L-threonyl-[protein] + ATP = O-phospho-L-threonyl-[protein] + ADP + H(+). It carries out the reaction [DNA-directed RNA polymerase] + ATP = phospho-[DNA-directed RNA polymerase] + ADP + H(+). With respect to regulation, phosphorylation at Thr-14 or Tyr-15 inactivates the enzyme, while phosphorylation at Thr-158 activates it. In terms of biological role, serine/threonine-protein kinase. Involved in the control of the cell cycle. Required for entry into S-phase and mitosis. Probable component of the kinase complex that phosphorylates the repetitive C-terminus of RNA polymerase II. This Theileria parva (East coast fever infection agent) protein is Cyclin-dependent kinase 2 homolog.